Consider the following 205-residue polypeptide: Coenzyme Q-binding protein COQ10, mitochondrial (205 aa).

Belongs to the COQ10 family. Interacts with coenzyme Q.

Its subcellular location is the mitochondrion inner membrane. Its function is as follows. Required for the function of coenzyme Q in the respiratory chain. May serve as a chaperone or may be involved in the transport of Q6 from its site of synthesis to the catalytic sites of the respiratory complexes. This is Coenzyme Q-binding protein COQ10, mitochondrial (coq10-1) from Dictyostelium discoideum (Social amoeba).